Reading from the N-terminus, the 599-residue chain is Mediator of RNA polymerase II transcription subunit 26 (599 aa).

Residues 10-87 (QIRDRLLQAI…RSWQKLIEPV (78 aa)) enclose the TFIIS N-terminal domain. 3 disordered regions span residues 98 to 331 (AGAP…RLEL), 352 to 403 (AGLG…RDYT), and 427 to 470 (FDPM…LQSP). Over residues 123–133 (SVHDLKYRNDM) the composition is skewed to basic and acidic residues. Polar residues predominate over residues 174–191 (VPNSSPLPTNGISGSPES). The span at 207 to 218 (NRLEHGENDKHS) shows a compositional bias: basic and acidic residues. The span at 314-324 (SPLPLAQPSTP) shows a compositional bias: pro residues. The span at 441–463 (EPVRADSPVHTEQPRTELDKPEA) shows a compositional bias: basic and acidic residues. A phosphoserine mark is found at Ser447 and Ser469.

Belongs to the Mediator complex subunit 26 family. In terms of assembly, component of the Mediator complex, which is composed of MED1, MED4, MED6, MED7, MED8, MED9, MED10, MED11, MED12, MED13, MED13L, MED14, MED15, MED16, MED17, MED18, MED19, MED20, MED21, MED22, MED23, MED24, MED25, MED26, MED27, MED29, MED30, MED31, CCNC, CDK8 and CDC2L6/CDK11. The MED12, MED13, CCNC and CDK8 subunits form a distinct module termed the CDK8 module. Mediator containing the CDK8 module is less active than Mediator lacking this module in supporting transcriptional activation. Individual preparations of the Mediator complex lacking one or more distinct subunits have been variously termed ARC, CRSP, DRIP, PC2, SMCC and TRAP. Interacts with CEBPB (when not methylated).

The protein resides in the nucleus. Its function is as follows. Component of the Mediator complex, a coactivator involved in the regulated transcription of nearly all RNA polymerase II-dependent genes. Mediator functions as a bridge to convey information from gene-specific regulatory proteins to the basal RNA polymerase II transcription machinery. Mediator is recruited to promoters by direct interactions with regulatory proteins and serves as a scaffold for the assembly of a functional pre-initiation complex with RNA polymerase II and the general transcription factors. The protein is Mediator of RNA polymerase II transcription subunit 26 (MED26) of Bos taurus (Bovine).